The sequence spans 346 residues: Aspartate-semialdehyde dehydrogenase (346 aa).

NADP(+) is bound by residues 10 to 13 (TGQG) and 38 to 39 (RS). Arg98 contacts phosphate. The active-site Acyl-thioester intermediate is Cys131. Residue Gln158 participates in substrate binding. 161 to 162 (SG) lines the NADP(+) pocket. Lys228 contacts phosphate. Arg250 lines the substrate pocket. The active-site Proton acceptor is the His257. Asn326 is an NADP(+) binding site.

This sequence belongs to the aspartate-semialdehyde dehydrogenase family. Homodimer.

The catalysed reaction is L-aspartate 4-semialdehyde + phosphate + NADP(+) = 4-phospho-L-aspartate + NADPH + H(+). The protein operates within amino-acid biosynthesis; L-lysine biosynthesis via DAP pathway; (S)-tetrahydrodipicolinate from L-aspartate: step 2/4. Its pathway is amino-acid biosynthesis; L-methionine biosynthesis via de novo pathway; L-homoserine from L-aspartate: step 2/3. It functions in the pathway amino-acid biosynthesis; L-threonine biosynthesis; L-threonine from L-aspartate: step 2/5. Functionally, catalyzes the NADPH-dependent formation of L-aspartate-semialdehyde (L-ASA) by the reductive dephosphorylation of L-aspartyl-4-phosphate. The protein is Aspartate-semialdehyde dehydrogenase of Mycolicibacterium smegmatis (Mycobacterium smegmatis).